A 395-amino-acid polypeptide reads, in one-letter code: NKAP-like protein (395 aa).

2 disordered regions span residues 1-77 (MSPV…RPLP) and 91-247 (CGGY…ISCK). Ser23 and Ser25 each carry phosphoserine. Polar residues predominate over residues 25 to 35 (SPPSALQTSRS). The span at 109–130 (DQEKEKEESYRQRRLKERERIG) shows a compositional bias: basic and acidic residues. The residue at position 149 (Ser149) is a Phosphoserine. Over residues 150-161 (DEHTPAEDEVKN) the composition is skewed to basic and acidic residues. 2 stretches are compositionally biased toward basic residues: residues 177–197 (KTSH…KHKK) and 214–238 (KKVK…KRTK).

It belongs to the NKAP family. As to quaternary structure, interacts with RBPJ, CIR1 and HDAC3. Specific to testis (at protein level). Detected in differenting spermatogonia and early spermatocytes (at protein level).

It localises to the nucleus. In terms of biological role, transcriptional repressor of Notch-mediated signaling. Required for spermatogenesis. This chain is NKAP-like protein, found in Mus musculus (Mouse).